Consider the following 334-residue polypeptide: S-adenosylmethionine decarboxylase proenzyme (334 aa).

Phe-7 is a substrate binding site. Catalysis depends on residues Glu-8 and Glu-11. Residue Glu-67 participates in substrate binding. Ser-68 functions as the Schiff-base intermediate with substrate; via pyruvic acid in the catalytic mechanism. Ser-68 bears the Pyruvic acid (Ser); by autocatalysis mark. Residue Cys-82 is the Proton donor; for catalytic activity of the active site. Residue Phe-223 coordinates substrate. Residues Ser-229 and His-243 each act as proton acceptor; for processing activity in the active site. Substrate is bound at residue Glu-247. The residue at position 298 (Ser-298) is a Phosphoserine.

It belongs to the eukaryotic AdoMetDC family. Heterotetramer of two alpha and two beta chains. Requires pyruvate as cofactor. In terms of processing, is synthesized initially as an inactive proenzyme. Formation of the active enzyme involves a self-maturation process in which the active site pyruvoyl group is generated from an internal serine residue via an autocatalytic post-translational modification. Two non-identical subunits are generated from the proenzyme in this reaction, and the pyruvate is formed at the N-terminus of the alpha chain, which is derived from the carboxyl end of the proenzyme. The post-translation cleavage follows an unusual pathway, termed non-hydrolytic serinolysis, in which the side chain hydroxyl group of the serine supplies its oxygen atom to form the C-terminus of the beta chain, while the remainder of the serine residue undergoes an oxidative deamination to produce ammonia and the pyruvoyl group blocking the N-terminus of the alpha chain.

It catalyses the reaction S-adenosyl-L-methionine + H(+) = S-adenosyl 3-(methylsulfanyl)propylamine + CO2. It participates in amine and polyamine biosynthesis; S-adenosylmethioninamine biosynthesis; S-adenosylmethioninamine from S-adenosyl-L-methionine: step 1/1. Its function is as follows. Essential for biosynthesis of the polyamines spermidine and spermine. Promotes maintenance and self-renewal of embryonic stem cells, by maintaining spermine levels. In Bos taurus (Bovine), this protein is S-adenosylmethionine decarboxylase proenzyme (AMD1).